Consider the following 209-residue polypeptide: tRNA (guanine-N(7)-)-methyltransferase (209 aa).

Residues aspartate 35, glutamate 60, asparagine 87, and aspartate 113 each contribute to the S-adenosyl-L-methionine site. The active site involves aspartate 113. Positions 117 and 149 each coordinate substrate.

This sequence belongs to the class I-like SAM-binding methyltransferase superfamily. TrmB family.

The enzyme catalyses guanosine(46) in tRNA + S-adenosyl-L-methionine = N(7)-methylguanosine(46) in tRNA + S-adenosyl-L-homocysteine. It participates in tRNA modification; N(7)-methylguanine-tRNA biosynthesis. In terms of biological role, catalyzes the formation of N(7)-methylguanine at position 46 (m7G46) in tRNA. This Prochlorococcus marinus subsp. pastoris (strain CCMP1986 / NIES-2087 / MED4) protein is tRNA (guanine-N(7)-)-methyltransferase.